We begin with the raw amino-acid sequence, 131 residues long: Large-conductance mechanosensitive channel (131 aa).

Helical transmembrane passes span 8-28 (FAVR…GAFG), 30-50 (IVSS…LGGI), and 67-87 (GAFL…FLFV).

The protein belongs to the MscL family. In terms of assembly, homopentamer.

The protein localises to the cell membrane. Channel that opens in response to stretch forces in the membrane lipid bilayer. May participate in the regulation of osmotic pressure changes within the cell. The polypeptide is Large-conductance mechanosensitive channel (Anoxybacillus flavithermus (strain DSM 21510 / WK1)).